We begin with the raw amino-acid sequence, 319 residues long: ADP-L-glycero-D-manno-heptose-6-epimerase (319 aa).

Residues 10–11 (FI), 31–32 (DD), Lys38, Lys53, and 79–83 (EGACS) each bind NADP(+). Tyr144 functions as the Proton acceptor in the catalytic mechanism. Lys148 is an NADP(+) binding site. Asn173 is a binding site for substrate. NADP(+) is bound by residues Val174 and Lys182. The active-site Proton acceptor is the Lys182. Substrate contacts are provided by residues Ser184, His191, 205-208 (FEGC), Arg218, and Tyr282.

It belongs to the NAD(P)-dependent epimerase/dehydratase family. HldD subfamily. Homopentamer. The cofactor is NADP(+).

It catalyses the reaction ADP-D-glycero-beta-D-manno-heptose = ADP-L-glycero-beta-D-manno-heptose. It functions in the pathway nucleotide-sugar biosynthesis; ADP-L-glycero-beta-D-manno-heptose biosynthesis; ADP-L-glycero-beta-D-manno-heptose from D-glycero-beta-D-manno-heptose 7-phosphate: step 4/4. Functionally, catalyzes the interconversion between ADP-D-glycero-beta-D-manno-heptose and ADP-L-glycero-beta-D-manno-heptose via an epimerization at carbon 6 of the heptose. The protein is ADP-L-glycero-D-manno-heptose-6-epimerase of Aeromonas salmonicida (strain A449).